The following is an 89-amino-acid chain: HssA/B-like protein DDB_G0295685 (89 aa).

Belongs to the hssA/B family.

In Dictyostelium discoideum (Social amoeba), this protein is HssA/B-like protein DDB_G0295685.